The sequence spans 741 residues: Zinc finger and BTB domain-containing protein 20 (741 aa).

The segment covering Met1–Glu17 has biased composition (basic and acidic residues). The interval Met1–Gly32 is disordered. The 64-residue stretch at Cys104–Gln167 folds into the BTB domain. The disordered stretch occupies residues Gly203–His235. Residues Asp206–His235 show a composition bias toward polar residues. At Thr211 the chain carries Phosphothreonine. A Glycyl lysine isopeptide (Lys-Gly) (interchain with G-Cter in SUMO1); alternate cross-link involves residue Lys330. Lys330 participates in a covalent cross-link: Glycyl lysine isopeptide (Lys-Gly) (interchain with G-Cter in SUMO2); alternate. Residues Arg350–Glu440 form a disordered region. The residue at position 353 (Ser353) is a Phosphoserine. Positions Glu354 to Glu367 are enriched in acidic residues. Phosphothreonine is present on Thr357. Lys371 participates in a covalent cross-link: Glycyl lysine isopeptide (Lys-Gly) (interchain with G-Cter in SUMO2). Positions Ala404–Thr423 are enriched in low complexity. Positions Asn424–Glu434 are enriched in polar residues. 4 consecutive C2H2-type zinc fingers follow at residues Tyr578–His600, His606–His628, Tyr634–His656, and Tyr662–His684. A phosphothreonine mark is found at Thr690 and Thr695. The C2H2-type 5 zinc finger occupies Tyr715–His737. Lys723 is covalently cross-linked (Glycyl lysine isopeptide (Lys-Gly) (interchain with G-Cter in SUMO2)).

In terms of assembly, can homodimerize. Binds to DNA. Post-translationally, sumoylated with SUMO1. In terms of tissue distribution, expressed in spleen, lymph node, thymus, peripheral blood leukocytes, and fetal liver.

The protein localises to the nucleus. In terms of biological role, may be a transcription factor that may be involved in hematopoiesis, oncogenesis, and immune responses. Plays a role in postnatal myogenesis, may be involved in the regulation of satellite cells self-renewal. This chain is Zinc finger and BTB domain-containing protein 20 (ZBTB20), found in Homo sapiens (Human).